The chain runs to 174 residues: Regenerating islet-derived protein 3-gamma (174 aa).

An N-terminal signal peptide occupies residues 1 to 26 (MLPRVALTTMSWMLLSSLMLLSQVQG). A propeptide spanning residues 27–37 (EDAKEDVPTSR) is cleaved from the precursor. 3 disulfide bridges follow: Cys-40–Cys-51, Cys-68–Cys-170, and Cys-145–Cys-162. The C-type lectin domain maps to 47–171 (YGSYCYALFS…CISELPYVCK (125 aa)). The tract at residues 103-118 (WIGLHDPTLGQEPNRG) is sufficient to activate EXTL3. A Zn(2+)-binding site is contributed by His-107. The short motif at 114-116 (EPN) is the EPN element. The Zn(2+) site is built by Glu-121 and His-144.

Forms a hexameric membrane-permeabilizing oligomeric pore on membrane phospholipids. The hexamer is formed by three dimers related by helical symmetry. Forms filaments, filamentation traps pore complexes and limits damage to host cells. Interacts with EXTL3. Post-translationally, proteolytic processing by trypsin removes an inhibitory N-terminal propeptide and is essential for peptidoglycan binding and antibacterial activity. In terms of tissue distribution, expressed in injured skeletal muscles and sciatic nerve (at protein level). Expressed in the pancreas. Expression increases during the acute phase of pancreatitis.

It localises to the secreted. The protein resides in the cytoplasm. With respect to regulation, lipopolysaccharide inhibits pore-forming activity, explaining why is bactericidal for Gram-positive but not Gram-negative bacteria. Functionally, bactericidal C-type lectin which acts exclusively against Gram-positive bacteria and mediates bacterial killing by binding to surface-exposed carbohydrate moieties of peptidoglycan. Restricts bacterial colonization of the intestinal epithelial surface and consequently limits activation of adaptive immune responses by the microbiota. Acts as a hormone in response to different stimuli like anti-inflammatory signals, such as IL17A, or gut microbiome. Is secreted by different cell types to activate its receptor EXTL3 and induce cell specific signaling pathways. Induced by IL17A in keratinocytes, regulates keratinocyte proliferation and differentiation after skin injury. In parallel, inhibits skin inflammation through the inhibition of inflammatory cytokines such as IL6 and TNF. Induced by IL22 in lung epithelial cells, inhibits cytokine production and regulates allergic airway inflammation. Induced in small intestine by inulin-enriched diet and Lactobacillus gasseri enriched microbiome, plays a role in the improvement of gut barrier function, the regulation of energy balance and glucose levels. Modulates microbiota composition in duodenal contents. Produced by nociceptor in response to endotoxins, prevents endotoxic death by targeting kynurenine pathway in microglia. In terms of biological role, has bacteriostatic activity. Its function is as follows. Has bactericidal activity against L.monocytogenes and methicillin-resistant S.aureus. The polypeptide is Regenerating islet-derived protein 3-gamma (Rattus norvegicus (Rat)).